A 338-amino-acid chain; its full sequence is Aspartate carbamoyltransferase catalytic subunit (338 aa).

2 residues coordinate carbamoyl phosphate: R59 and T60. K87 serves as a coordination point for L-aspartate. Carbamoyl phosphate-binding residues include R109, H142, and Q145. Positions 182 and 253 each coordinate L-aspartate. Residues G294 and P295 each contribute to the carbamoyl phosphate site.

This sequence belongs to the aspartate/ornithine carbamoyltransferase superfamily. ATCase family. In terms of assembly, heterododecamer (2C3:3R2) of six catalytic PyrB chains organized as two trimers (C3), and six regulatory PyrI chains organized as three dimers (R2).

The catalysed reaction is carbamoyl phosphate + L-aspartate = N-carbamoyl-L-aspartate + phosphate + H(+). The protein operates within pyrimidine metabolism; UMP biosynthesis via de novo pathway; (S)-dihydroorotate from bicarbonate: step 2/3. Functionally, catalyzes the condensation of carbamoyl phosphate and aspartate to form carbamoyl aspartate and inorganic phosphate, the committed step in the de novo pyrimidine nucleotide biosynthesis pathway. This Prochlorococcus marinus (strain MIT 9301) protein is Aspartate carbamoyltransferase catalytic subunit.